The sequence spans 477 residues: 3-isopropylmalate dehydratase large subunit (477 aa).

Residues C352, C413, and C416 each contribute to the [4Fe-4S] cluster site.

The protein belongs to the aconitase/IPM isomerase family. LeuC type 1 subfamily. In terms of assembly, heterodimer of LeuC and LeuD. It depends on [4Fe-4S] cluster as a cofactor.

It carries out the reaction (2R,3S)-3-isopropylmalate = (2S)-2-isopropylmalate. The protein operates within amino-acid biosynthesis; L-leucine biosynthesis; L-leucine from 3-methyl-2-oxobutanoate: step 2/4. Catalyzes the isomerization between 2-isopropylmalate and 3-isopropylmalate, via the formation of 2-isopropylmaleate. The sequence is that of 3-isopropylmalate dehydratase large subunit from Pseudomonas putida (strain GB-1).